The sequence spans 992 residues: UvrABC system protein A (992 aa).

Positions 1 to 11 are enriched in polar residues; it reads MPKNSSTTVSS. Positions 1 to 30 are disordered; the sequence is MPKNSSTTVSSAVEAHAGGLASGPGGARSG. Residue 62–69 coordinates ATP; it reads GLSGSGKS. A C4-type; atypical zinc finger spans residues 302–330; sequence CPNGHEQTVDEIEPRSFSFNNPFGACPEC. ABC transporter domains are found at residues 360-639 and 659-988; these read WSLG…TRSV and PEKG…RFLA. 692 to 699 is a binding site for ATP; the sequence is GVSGSGKS. The segment at 791 to 817 adopts a C4-type zinc-finger fold; sequence CEACAGDGTLKIEMNFLPDVYVPCEVC.

The protein belongs to the ABC transporter superfamily. UvrA family. Forms a heterotetramer with UvrB during the search for lesions.

The protein localises to the cytoplasm. In terms of biological role, the UvrABC repair system catalyzes the recognition and processing of DNA lesions. UvrA is an ATPase and a DNA-binding protein. A damage recognition complex composed of 2 UvrA and 2 UvrB subunits scans DNA for abnormalities. When the presence of a lesion has been verified by UvrB, the UvrA molecules dissociate. This Micrococcus luteus (Micrococcus lysodeikticus) protein is UvrABC system protein A.